A 437-amino-acid chain; its full sequence is GTPase Der (437 aa).

EngA-type G domains lie at P4 to A167 and I176 to R352. Residues G10–S17, D57–I61, N119–D122, G182–S189, D230–M234, and N295–D298 each bind GTP. Residues K353 to K437 enclose the KH-like domain.

Belongs to the TRAFAC class TrmE-Era-EngA-EngB-Septin-like GTPase superfamily. EngA (Der) GTPase family. Associates with the 50S ribosomal subunit.

Its function is as follows. GTPase that plays an essential role in the late steps of ribosome biogenesis. This Leuconostoc citreum (strain KM20) protein is GTPase Der.